A 196-amino-acid polypeptide reads, in one-letter code: Imidazoleglycerol-phosphate dehydratase (196 aa).

It belongs to the imidazoleglycerol-phosphate dehydratase family.

It is found in the cytoplasm. It catalyses the reaction D-erythro-1-(imidazol-4-yl)glycerol 3-phosphate = 3-(imidazol-4-yl)-2-oxopropyl phosphate + H2O. It participates in amino-acid biosynthesis; L-histidine biosynthesis; L-histidine from 5-phospho-alpha-D-ribose 1-diphosphate: step 6/9. This Zymomonas mobilis subsp. mobilis (strain ATCC 31821 / ZM4 / CP4) protein is Imidazoleglycerol-phosphate dehydratase.